Consider the following 150-residue polypeptide: Macrodomain Ter protein (150 aa).

The protein belongs to the MatP family. Homodimer.

It is found in the cytoplasm. Functionally, required for spatial organization of the terminus region of the chromosome (Ter macrodomain) during the cell cycle. Prevents early segregation of duplicated Ter macrodomains during cell division. Binds specifically to matS, which is a 13 bp signature motif repeated within the Ter macrodomain. In Shigella dysenteriae serotype 1 (strain Sd197), this protein is Macrodomain Ter protein.